A 402-amino-acid chain; its full sequence is Guanine nucleotide-binding protein subunit alpha-1 (402 aa).

Polar residues predominate over residues Met1–Ser12. Positions Met1–Ala70 are disordered. Residue Gly2 is the site of N-myristoyl glycine attachment. The S-palmitoyl cysteine moiety is linked to residue Cys3. Residues Lys23–Pro33 are compositionally biased toward basic and acidic residues. The span at Glu34–Pro69 shows a compositional bias: pro residues. Residues Glu82–Ala402 form the G-alpha domain. Residues Gly85–Thr98 form a G1 motif region. Residues Glu93, Ser94, Gly95, Lys96, Thr97, Thr98, Asp198, Leu223, Ser229, Gly251, Asn317, Lys318, Asp320, and Ala377 each coordinate GTP. Residue Thr97 participates in Mg(2+) binding. The segment at Asp221 to Ser229 is G2 motif. Residue Ser229 participates in Mg(2+) binding. The G3 motif stretch occupies residues Ile244–Lys253. Positions Phe313 to Asp320 are G4 motif. Residues Ile375–Gly380 form a G5 motif region.

Belongs to the G-alpha family. As to quaternary structure, g proteins are composed of 3 units; alpha, beta and gamma. The alpha chain contains the guanine nucleotide binding site. Mg(2+) serves as cofactor.

The protein localises to the cytoplasm. The protein resides in the perinuclear region. It localises to the endomembrane system. Guanine nucleotide-binding proteins (G proteins) are involved as modulators or transducers in various transmembrane signaling systems. The protein is Guanine nucleotide-binding protein subunit alpha-1 (GA1) of Trichomonas vaginalis.